Here is a 318-residue protein sequence, read N- to C-terminus: Acetyl-coenzyme A carboxylase carboxyl transferase subunit alpha (318 aa).

The region spanning 38 to 292 is the CoA carboxyltransferase C-terminal domain; it reads KLEKRLAKLE…NKTITKSLHA (255 aa).

It belongs to the AccA family. In terms of assembly, acetyl-CoA carboxylase is a heterohexamer composed of biotin carboxyl carrier protein (AccB), biotin carboxylase (AccC) and two subunits each of ACCase subunit alpha (AccA) and ACCase subunit beta (AccD).

It localises to the cytoplasm. It carries out the reaction N(6)-carboxybiotinyl-L-lysyl-[protein] + acetyl-CoA = N(6)-biotinyl-L-lysyl-[protein] + malonyl-CoA. The protein operates within lipid metabolism; malonyl-CoA biosynthesis; malonyl-CoA from acetyl-CoA: step 1/1. Functionally, component of the acetyl coenzyme A carboxylase (ACC) complex. First, biotin carboxylase catalyzes the carboxylation of biotin on its carrier protein (BCCP) and then the CO(2) group is transferred by the carboxyltransferase to acetyl-CoA to form malonyl-CoA. The sequence is that of Acetyl-coenzyme A carboxylase carboxyl transferase subunit alpha from Listeria monocytogenes serotype 4b (strain CLIP80459).